The primary structure comprises 379 residues: Carbamoyl phosphate synthase small chain (379 aa).

The CPSase stretch occupies residues 1–184; it reads MVSLYLENGL…LDYKPFDEKN (184 aa). L-glutamine contacts are provided by serine 44, glycine 240, and glycine 242. The Glutamine amidotransferase type-1 domain occupies 188-378; it reads TIAVLDFGAK…VKLLENFPTR (191 aa). The active-site Nucleophile is cysteine 268. Positions 269, 272, 310, and 313 each coordinate L-glutamine. Residues histidine 351 and glutamate 353 contribute to the active site.

This sequence belongs to the CarA family. In terms of assembly, composed of two chains; the small (or glutamine) chain promotes the hydrolysis of glutamine to ammonia, which is used by the large (or ammonia) chain to synthesize carbamoyl phosphate. Tetramer of heterodimers (alpha,beta)4.

The catalysed reaction is hydrogencarbonate + L-glutamine + 2 ATP + H2O = carbamoyl phosphate + L-glutamate + 2 ADP + phosphate + 2 H(+). It catalyses the reaction L-glutamine + H2O = L-glutamate + NH4(+). Its pathway is amino-acid biosynthesis; L-arginine biosynthesis; carbamoyl phosphate from bicarbonate: step 1/1. The protein operates within pyrimidine metabolism; UMP biosynthesis via de novo pathway; (S)-dihydroorotate from bicarbonate: step 1/3. Its function is as follows. Small subunit of the glutamine-dependent carbamoyl phosphate synthetase (CPSase). CPSase catalyzes the formation of carbamoyl phosphate from the ammonia moiety of glutamine, carbonate, and phosphate donated by ATP, constituting the first step of 2 biosynthetic pathways, one leading to arginine and/or urea and the other to pyrimidine nucleotides. The small subunit (glutamine amidotransferase) binds and cleaves glutamine to supply the large subunit with the substrate ammonia. This Helicobacter acinonychis (strain Sheeba) protein is Carbamoyl phosphate synthase small chain.